The chain runs to 662 residues: Chaperone protein HtpG (662 aa).

The segment at 1–352 (MSKQTLSFQA…SADLPLNVSR (352 aa)) is a; substrate-binding. Positions 353-594 (ELLQESRDVR…GDGMSTQLAR (242 aa)) are b. The disordered stretch occupies residues 382–402 (HDRHDSPAPQPAEGADRVSDV). Residues 595–662 (LLKQAGQQAP…YVKRVNALLV (68 aa)) are c.

Belongs to the heat shock protein 90 family. In terms of assembly, homodimer.

It localises to the cytoplasm. Functionally, molecular chaperone. Has ATPase activity. The chain is Chaperone protein HtpG from Verminephrobacter eiseniae (strain EF01-2).